The chain runs to 409 residues: L-cysteine:1D-myo-inositol 2-amino-2-deoxy-alpha-D-glucopyranoside ligase (409 aa).

Cys-43 contributes to the Zn(2+) binding site. Residues Cys-43–Thr-46, Thr-58, and Asn-81–Thr-83 contribute to the L-cysteinyl-5'-AMP site. The 'HIGH' region signature appears at Ile-45 to His-55. Residues Glu-183–Pro-188 carry the 'ERGGDP' region motif. Trp-224 contacts L-cysteinyl-5'-AMP. Cys-228 is a binding site for Zn(2+). Gly-246–Asp-248 serves as a coordination point for L-cysteinyl-5'-AMP. His-253 is a binding site for Zn(2+). Val-280 contacts L-cysteinyl-5'-AMP. Residues Lys-286 to Ser-290 carry the 'KMSKS' region motif.

The protein belongs to the class-I aminoacyl-tRNA synthetase family. MshC subfamily. In terms of assembly, monomer. Zn(2+) serves as cofactor.

The catalysed reaction is 1D-myo-inositol 2-amino-2-deoxy-alpha-D-glucopyranoside + L-cysteine + ATP = 1D-myo-inositol 2-(L-cysteinylamino)-2-deoxy-alpha-D-glucopyranoside + AMP + diphosphate + H(+). Catalyzes the ATP-dependent condensation of GlcN-Ins and L-cysteine to form L-Cys-GlcN-Ins. The polypeptide is L-cysteine:1D-myo-inositol 2-amino-2-deoxy-alpha-D-glucopyranoside ligase (Streptomyces scabiei (strain 87.22)).